The chain runs to 272 residues: Shikimate dehydrogenase (NADP(+)) (272 aa).

Residues serine 14–serine 16 and threonine 61 contribute to the shikimate site. Lysine 65 acts as the Proton acceptor in catalysis. Aspartate 102 lines the shikimate pocket. NADP(+)-binding positions include glycine 127–alanine 131, asparagine 151–lysine 156, and leucine 215. Tyrosine 217 serves as a coordination point for shikimate. Glycine 239 lines the NADP(+) pocket.

The protein belongs to the shikimate dehydrogenase family. Homodimer.

The enzyme catalyses shikimate + NADP(+) = 3-dehydroshikimate + NADPH + H(+). It functions in the pathway metabolic intermediate biosynthesis; chorismate biosynthesis; chorismate from D-erythrose 4-phosphate and phosphoenolpyruvate: step 4/7. Functionally, involved in the biosynthesis of the chorismate, which leads to the biosynthesis of aromatic amino acids. Catalyzes the reversible NADPH linked reduction of 3-dehydroshikimate (DHSA) to yield shikimate (SA). This Coxiella burnetii (strain CbuK_Q154) (Coxiella burnetii (strain Q154)) protein is Shikimate dehydrogenase (NADP(+)).